A 253-amino-acid polypeptide reads, in one-letter code: Patatin-like phospholipase domain-containing protein 4 (253 aa).

Residues 6–176 (LSFAACGFLG…TNALPILPVG (171 aa)) form the PNPLA domain. The GXSXG signature appears at 41–45 (GASAG). Serine 43 functions as the Nucleophile in the catalytic mechanism. Aspartate 163 functions as the Proton acceptor in the catalytic mechanism. The DGA/G motif lies at 163–165 (DGG).

In terms of tissue distribution, expressed in all tissues examined, including heart, brain, placenta, lung, liver, muscle, kidney, pancreas and spleen.

The protein resides in the mitochondrion. The enzyme catalyses a triacylglycerol + H2O = a diacylglycerol + a fatty acid + H(+). It catalyses the reaction a 1,2-diacyl-sn-glycero-3-phosphocholine + H2O = a 1-acyl-sn-glycero-3-phosphocholine + a fatty acid + H(+). The catalysed reaction is an all-trans-retinyl ester + H2O = all-trans-retinol + a fatty acid + H(+). It carries out the reaction 2 a 1-acylglycerol = a 1,2-diacylglycerol + glycerol. The enzyme catalyses a 1-acylglycerol + a 1,2-diacylglycerol = a triacylglycerol + glycerol. It catalyses the reaction a 1-acylglycerol + a 1,3-diacylglycerol = a triacylglycerol + glycerol. The catalysed reaction is a triacylglycerol + H2O = a 1,2-diacylglycerol + a fatty acid + H(+). It carries out the reaction a triacylglycerol + H2O = a 1,3-diacylglycerol + a fatty acid + H(+). The enzyme catalyses a triacylglycerol + all-trans-retinol = an all-trans-retinyl ester + a diacylglycerol. It catalyses the reaction 2 1-(9Z-octadecenoyl)-glycerol = 1,2-di-(9Z-octadecenoyl)-glycerol + glycerol. The catalysed reaction is 1-(9Z-octadecenoyl)-glycerol + 1,2-di-(9Z-octadecenoyl)-glycerol = 1,2,3-tri-(9Z-octadecenoyl)-glycerol + glycerol. It carries out the reaction 1-(9Z-octadecenoyl)-glycerol + 1,3-di-(9Z-octadecenoyl)-glycerol = 1,2,3-tri-(9Z-octadecenoyl)-glycerol + glycerol. The enzyme catalyses 1,2-di-(9Z-octadecenoyl)-glycerol + (9Z)-octadecenoate + H(+) = 1,2,3-tri-(9Z-octadecenoyl)-glycerol + H2O. It catalyses the reaction 1,2,3-tri-(9Z-octadecenoyl)-glycerol + H2O = 1,3-di-(9Z-octadecenoyl)-glycerol + (9Z)-octadecenoate + H(+). The catalysed reaction is all-trans-retinyl hexadecanoate + H2O = all-trans-retinol + hexadecanoate + H(+). It carries out the reaction 1,2,3-tri-(9Z-octadecenoyl)-glycerol + all-trans-retinol = all-trans-retinyl 9Z-octadecenoate + di-(9Z)-octadecenoylglycerol. With respect to regulation, the triglyceride lipase activity is inhibited by BEL ((E)-6-(bromomethylene)-3-(1-naphthalenyl)-2H-tetrahydropyran-2-one), a suicide substrate inhibitor. Functionally, has abundant triacylglycerol lipase activity. Transfers fatty acid from triglyceride to retinol, hydrolyzes retinylesters, and generates 1,3-diacylglycerol from triglycerides. Additionally possesses acylglycerol transacylase and phospholipase A2 activities. In Homo sapiens (Human), this protein is Patatin-like phospholipase domain-containing protein 4.